Consider the following 421-residue polypeptide: Signal recognition particle receptor FtsY (421 aa).

Over residues 1-10 (MFSFFRRKKK) the composition is skewed to basic residues. The disordered stretch occupies residues 1 to 22 (MFSFFRRKKKQETPAPEEAQIQ). GTP contacts are provided by residues 228 to 235 (GINGAGKT), 309 to 313 (DTAGR), and 373 to 376 (TKLD).

The protein belongs to the GTP-binding SRP family. FtsY subfamily. Part of the signal recognition particle protein translocation system, which is composed of SRP and FtsY. SRP is a ribonucleoprotein composed of Ffh and a 4.5S RNA molecule.

The protein localises to the cell membrane. The protein resides in the cytoplasm. It catalyses the reaction GTP + H2O = GDP + phosphate + H(+). Functionally, involved in targeting and insertion of nascent membrane proteins into the cytoplasmic membrane. Acts as a receptor for the complex formed by the signal recognition particle (SRP) and the ribosome-nascent chain (RNC). Interaction with SRP-RNC leads to the transfer of the RNC complex to the Sec translocase for insertion into the membrane, the hydrolysis of GTP by both Ffh and FtsY, and the dissociation of the SRP-FtsY complex into the individual components. The protein is Signal recognition particle receptor FtsY of Neisseria meningitidis serogroup C.